Here is a 343-residue protein sequence, read N- to C-terminus: Mitochondrial distribution and morphology protein 34 (343 aa).

An SMP-LTD domain is found at 1-196; that stretch reads MSFVFPSWST…LPGIIHRLSQ (196 aa). Disordered stretches follow at residues 227-255 and 300-325; these read EVEEEENEENHGTSPGNEESFPPRHIGPG and GAGTGSSGRASLASSSVGEGDIKAKR. The segment covering 306 to 317 has biased composition (low complexity); the sequence is SGRASLASSSVG.

Belongs to the MDM34 family. Component of the ER-mitochondria encounter structure (ERMES) or MDM complex, composed of MMM1, MDM10, MDM12 and MDM34.

The protein resides in the mitochondrion outer membrane. Component of the ERMES/MDM complex, which serves as a molecular tether to connect the endoplasmic reticulum (ER) and mitochondria. Components of this complex are involved in the control of mitochondrial shape and protein biogenesis, and function in nonvesicular lipid trafficking between the ER and mitochondria. MDM34 is required for the interaction of the ER-resident membrane protein MMM1 and the outer mitochondrial membrane-resident beta-barrel protein MDM10. In Cryptococcus neoformans var. neoformans serotype D (strain B-3501A) (Filobasidiella neoformans), this protein is Mitochondrial distribution and morphology protein 34.